Here is a 274-residue protein sequence, read N- to C-terminus: Large ribosomal subunit protein uL2 (274 aa).

Residues 223–274 are disordered; the sequence is VAMNPVDHPHGGGEGRTGEGRHAVDPWGNLTKGYRTRNNKRTQSMIVSRRKK. Positions 229 to 246 are enriched in basic and acidic residues; the sequence is DHPHGGGEGRTGEGRHAV.

The protein belongs to the universal ribosomal protein uL2 family. As to quaternary structure, part of the 50S ribosomal subunit. Forms a bridge to the 30S subunit in the 70S ribosome.

Its function is as follows. One of the primary rRNA binding proteins. Required for association of the 30S and 50S subunits to form the 70S ribosome, for tRNA binding and peptide bond formation. It has been suggested to have peptidyltransferase activity; this is somewhat controversial. Makes several contacts with the 16S rRNA in the 70S ribosome. The sequence is that of Large ribosomal subunit protein uL2 from Verminephrobacter eiseniae (strain EF01-2).